Here is a 483-residue protein sequence, read N- to C-terminus: SWI/SNF-related matrix-associated actin-dependent regulator of chromatin subfamily D member 3 (483 aa).

Ala2 is subject to N-acetylalanine. Positions 27–102 (RPGMPSGARM…ARSRSAKRRK (76 aa)) are disordered. Residues 78–88 (QSQAQGQGQPV) show a composition bias toward low complexity. Ser178 is subject to Phosphoserine. The region spanning 258–335 (YQPPQFKLDP…PQRLTALLLP (78 aa)) is the SWIB/MDM2 domain.

Belongs to the SMARCD family. In terms of assembly, component of the multiprotein chromatin-remodeling complexes SWI/SNF: SWI/SNF-A (BAF), SWI/SNF-B (PBAF) and related complexes. The canonical complex contains a catalytic subunit (either SMARCA4/BRG1/BAF190A or SMARCA2/BRM/BAF190B) and at least SMARCE1, ACTL6A/BAF53, SMARCC1/BAF155, SMARCC2/BAF170, and SMARCB1/SNF5/BAF47. Other subunits specific to each of the complexes may also be present permitting several possible combinations developmentally and tissue specific. Component of the BAF complex, which includes at least actin (ACTB), ARID1A/BAF250A, ARID1B/BAF250B, SMARCA2/BRM, SMARCA4/BRG1/BAF190A, ACTL6A/BAF53, ACTL6B/BAF53B, SMARCE1/BAF57, SMARCC1/BAF155, SMARCC2/BAF170, SMARCB1/SNF5/INI1, and one or more SMARCD1/BAF60A, SMARCD2/BAF60B, or SMARCD3/BAF60C. In muscle cells, the BAF complex also contains DPF3. Component of neural progenitors-specific chromatin remodeling complex (npBAF complex) composed of at least, ARID1A/BAF250A or ARID1B/BAF250B, SMARCD1/BAF60A, SMARCD3/BAF60C, SMARCA2/BRM/BAF190B, SMARCA4/BRG1/BAF190A, SMARCB1/BAF47, SMARCC1/BAF155, SMARCE1/BAF57, SMARCC2/BAF170, PHF10/BAF45A, ACTL6A/BAF53A and actin. Component of neuron-specific chromatin remodeling complex (nBAF complex) composed of at least, ARID1A/BAF250A or ARID1B/BAF250B, SMARCD1/BAF60A, SMARCD3/BAF60C, SMARCA2/BRM/BAF190B, SMARCA4/BRG1/BAF190A, SMARCB1/BAF47, SMARCC1/BAF155, SMARCE1/BAF57, SMARCC2/BAF170, DPF1/BAF45B, DPF3/BAF45C, ACTL6B/BAF53B and actin. May be a component of the SWI/SNF-B (PBAF) chromatin remodeling complex, at least composed of SMARCA4/BRG1, SMARCB1/BAF47/SNF5, ACTL6A/BAF53A or ACTL6B/BAF53B, SMARCE1/BAF57, SMARCD1/BAF60A, SMARCD2/BAF60B, perhaps SMARCD3/BAF60C, SMARCC1/BAF155, SMARCC2/BAF170, PBRM1/BAF180, ARID2/BAF200 and actin. Component of SWI/SNF (GBAF) subcomplex, which includes at least BICRA or BICRAL (mutually exclusive), BRD9, SS18, SMARCA2/BRM, SMARCA4/BRG1/BAF190A, ACTL6A/BAF53, SMARCC1/BAF155, and SMARCD1/BAF60A. Interacts with SMARCA4/BRG1/BAF190A. The precise distribution of the related SMARCD1, SMARCD2 and SMARCD3 proteins among these and other SWI/SNF nucleosome-remodeling complexes is not fully known. May allow recruitment of SWI/SNF containing complexes specifically to promoters where these factors are located. Also interacts with several nuclear receptors including PPARG/NR1C3, RXRA/NR1F1, ESR1, NR5A1, NR5A2/LRH1 and other transcriptional activators including the HLH protein SREBF1/SREBP1 and the homeobox protein PBX1. Interacts with PRDM1/BLIMP1. In terms of tissue distribution, ubiquitously expressed.

The protein resides in the nucleus. In terms of biological role, involved in transcriptional activation and repression of select genes by chromatin remodeling (alteration of DNA-nucleosome topology). Component of SWI/SNF chromatin remodeling complexes that carry out key enzymatic activities, changing chromatin structure by altering DNA-histone contacts within a nucleosome in an ATP-dependent manner. Stimulates nuclear receptor mediated transcription. Belongs to the neural progenitors-specific chromatin remodeling complex (npBAF complex) and the neuron-specific chromatin remodeling complex (nBAF complex). During neural development a switch from a stem/progenitor to a postmitotic chromatin remodeling mechanism occurs as neurons exit the cell cycle and become committed to their adult state. The transition from proliferating neural stem/progenitor cells to postmitotic neurons requires a switch in subunit composition of the npBAF and nBAF complexes. As neural progenitors exit mitosis and differentiate into neurons, npBAF complexes which contain ACTL6A/BAF53A and PHF10/BAF45A, are exchanged for homologous alternative ACTL6B/BAF53B and DPF1/BAF45B or DPF3/BAF45C subunits in neuron-specific complexes (nBAF). The npBAF complex is essential for the self-renewal/proliferative capacity of the multipotent neural stem cells. The nBAF complex along with CREST plays a role regulating the activity of genes essential for dendrite growth. This is SWI/SNF-related matrix-associated actin-dependent regulator of chromatin subfamily D member 3 (Smarcd3) from Mus musculus (Mouse).